The chain runs to 449 residues: TNF receptor-associated factor family protein DDB_G0272340 (449 aa).

The segment at 33 to 76 (CPICEECIMDVNKCEALQCKEGHVHCRLCWMKSLESKKECMTCR) adopts an RING-type; degenerate zinc-finger fold. 2 consecutive TRAF-type zinc fingers follow at residues 133–187 (GHIK…IDDS) and 189–251 (VHYS…SELS). Residues 263–309 (MEATIDQHICKFEKSEKEYKKLELEYNRLKDDFKILQSELKVIRELK) are a coiled coil. The region spanning 311 to 437 (NYQNKWVITN…QNSVTLNINI (127 aa)) is the MATH domain.

Belongs to the TNF receptor-associated factor family. A subfamily.

It is found in the cytoplasm. Probable adapter protein and signal transducer that links members of the tumor necrosis factor receptor family to different signaling pathways by association with the receptor cytoplasmic domain and kinases. The chain is TNF receptor-associated factor family protein DDB_G0272340 from Dictyostelium discoideum (Social amoeba).